Here is a 345-residue protein sequence, read N- to C-terminus: Phosphoribosylformylglycinamidine cyclo-ligase (345 aa).

This sequence belongs to the AIR synthase family.

The protein localises to the cytoplasm. The catalysed reaction is 2-formamido-N(1)-(5-O-phospho-beta-D-ribosyl)acetamidine + ATP = 5-amino-1-(5-phospho-beta-D-ribosyl)imidazole + ADP + phosphate + H(+). It functions in the pathway purine metabolism; IMP biosynthesis via de novo pathway; 5-amino-1-(5-phospho-D-ribosyl)imidazole from N(2)-formyl-N(1)-(5-phospho-D-ribosyl)glycinamide: step 2/2. This chain is Phosphoribosylformylglycinamidine cyclo-ligase, found in Escherichia coli O6:K15:H31 (strain 536 / UPEC).